A 445-amino-acid polypeptide reads, in one-letter code: Branched-chain amino acid permease BraB (445 aa).

12 consecutive transmembrane segments (helical) span residues 11–31 (IIIGFMLFALFFGAGNMIYPP), 45–65 (IGGFLLTGVGLPLLGIIAIAL), 79–99 (PVFGTIFTVVLYLSIGPLFAI), 122–142 (LSLLIFTLIFFGVTYYLALNP), 158–178 (FTIILIIVLKAIFTPMGGLGA), 192–212 (FLEGYKTMDALASIVFGVVVV), 233–253 (AGVIAALGLTFIYVSLAYLGA), 275–295 (YLFGSLGNIVLGAAITVACLT), 311–331 (LIPALSYKIVVTIVTLFSLII), 339–359 (IIAFSVPILSAIYPLAIVIIV), 375–395 (IACLIGTGLFSILDGIKAAGF), and 415–435 (IGWVLPGIVGAVIGYVLTLFI).

Belongs to the branched chain amino acid transporter family.

The protein localises to the cell membrane. Functionally, branched-chain amino acid transport system which is involved in the uptake of isoleucine, valine and probably leucine. Together with BcaP and BrnQ, plays an important role in the activation of CodY, a branched-chain amino acid-responsive transcriptional regulator that controls the expression of several dozen transcription units in B.subtilis. This is Branched-chain amino acid permease BraB from Bacillus subtilis (strain 168).